The following is a 255-amino-acid chain: Acetylglutamate kinase (255 aa).

Substrate is bound by residues 40 to 41, Arg62, and Asn153; that span reads GG.

It belongs to the acetylglutamate kinase family. ArgB subfamily.

Its subcellular location is the cytoplasm. It catalyses the reaction N-acetyl-L-glutamate + ATP = N-acetyl-L-glutamyl 5-phosphate + ADP. It functions in the pathway amino-acid biosynthesis; L-arginine biosynthesis; N(2)-acetyl-L-ornithine from L-glutamate: step 2/4. Catalyzes the ATP-dependent phosphorylation of N-acetyl-L-glutamate. The sequence is that of Acetylglutamate kinase from Bacillus anthracis (strain A0248).